The chain runs to 134 residues: Small ribosomal subunit protein bS6 (134 aa).

Residues 103-134 are disordered; it reads AAPVKSAEEGTEEVAAEAATEAPAETTTTVEG. Positions 118–134 are enriched in low complexity; sequence AEAATEAPAETTTTVEG.

Belongs to the bacterial ribosomal protein bS6 family.

Functionally, binds together with bS18 to 16S ribosomal RNA. This Citrifermentans bemidjiense (strain ATCC BAA-1014 / DSM 16622 / JCM 12645 / Bem) (Geobacter bemidjiensis) protein is Small ribosomal subunit protein bS6.